The sequence spans 124 residues: Large ribosomal subunit protein bL12 (124 aa).

It belongs to the bacterial ribosomal protein bL12 family. As to quaternary structure, homodimer. Part of the ribosomal stalk of the 50S ribosomal subunit. Forms a multimeric L10(L12)X complex, where L10 forms an elongated spine to which 2 to 4 L12 dimers bind in a sequential fashion. Binds GTP-bound translation factors.

In terms of biological role, forms part of the ribosomal stalk which helps the ribosome interact with GTP-bound translation factors. Is thus essential for accurate translation. This Ralstonia nicotianae (strain ATCC BAA-1114 / GMI1000) (Ralstonia solanacearum) protein is Large ribosomal subunit protein bL12.